Consider the following 437-residue polypeptide: GTPase Obg (437 aa).

Residues 2 to 160 form the Obg domain; sequence SMFLDTAKIK…RNLELELKVL (159 aa). Residues 161-338 form the OBG-type G domain; that stretch reads ADVGLVGFPS…LLEATAELLE (178 aa). GTP contacts are provided by residues 167 to 174, 192 to 196, 214 to 217, 284 to 287, and 319 to 321; these read GFPSVGKS, FTTIV, DLPG, NKMD, and SGI. The Mg(2+) site is built by Ser174 and Thr194. The OCT domain occupies 359–437; sequence GFNPDEPEFA…IGKFEFEFVD (79 aa).

Belongs to the TRAFAC class OBG-HflX-like GTPase superfamily. OBG GTPase family. In terms of assembly, monomer. It depends on Mg(2+) as a cofactor.

It localises to the cytoplasm. An essential GTPase which binds GTP, GDP and possibly (p)ppGpp with moderate affinity, with high nucleotide exchange rates and a fairly low GTP hydrolysis rate. Plays a role in control of the cell cycle, stress response, ribosome biogenesis and in those bacteria that undergo differentiation, in morphogenesis control. The polypeptide is GTPase Obg (Streptococcus suis (strain 98HAH33)).